Consider the following 171-residue polypeptide: Endoribonuclease YbeY (171 aa).

H130, H134, and H140 together coordinate Zn(2+).

It belongs to the endoribonuclease YbeY family. Zn(2+) is required as a cofactor.

The protein resides in the cytoplasm. Functionally, single strand-specific metallo-endoribonuclease involved in late-stage 70S ribosome quality control and in maturation of the 3' terminus of the 16S rRNA. The polypeptide is Endoribonuclease YbeY (Neisseria meningitidis serogroup C / serotype 2a (strain ATCC 700532 / DSM 15464 / FAM18)).